Here is a 304-residue protein sequence, read N- to C-terminus: Protein YIF1B (304 aa).

Over 1–146 the chain is Cytoplasmic; the sequence is MMEYPNQSGF…APRFDINAPD (146 aa). Residues 21–54 are disordered; the sequence is MRGSAMEPSDPTQLFDDTSSGVNKHEPGRVGKSP. Residues 30–42 show a composition bias toward polar residues; the sequence is DPTQLFDDTSSGV. A helical transmembrane segment spans residues 147–167; the sequence is LYIPVMGFITYVLVAGLALGT. At 168 to 182 the chain is on the extracellular side; the sequence is QNRFSPEILGIQASS. Residues 183 to 203 form a helical membrane-spanning segment; that stretch reads ALVWLIIEVLAVLLSLYLVTV. Residues 204–212 lie on the Cytoplasmic side of the membrane; that stretch reads NTDLTTIDL. The helical transmembrane segment at 213–233 threads the bilayer; the sequence is VAFSGYKYVGMIVGVVAGLLF. The Extracellular segment spans residues 234–236; it reads GRT. A helical membrane pass occupies residues 237 to 257; that stretch reads GYYLALLWFCASIFVFTIRTL. Over 258–282 the chain is Cytoplasmic; it reads RLKILSEAAAEGRLVRGTKNQLRMY. A helical transmembrane segment spans residues 283 to 303; the sequence is LTMAIAAAQPVFMYWLTFHLV. Position 304 (arginine 304) is a topological domain, extracellular.

The protein belongs to the YIF1 family.

The protein localises to the endoplasmic reticulum membrane. It localises to the golgi apparatus membrane. The protein resides in the endoplasmic reticulum-Golgi intermediate compartment membrane. In terms of biological role, functions in endoplasmic reticulum to Golgi vesicle-mediated transport and regulates the proper organization of the endoplasmic reticulum and the Golgi. Plays a key role in targeting to neuronal dendrites receptors such as HTR1A. Plays also a role in primary cilium and sperm flagellum assembly probably through protein transport to these compartments. This is Protein YIF1B (yif1b) from Danio rerio (Zebrafish).